Reading from the N-terminus, the 251-residue chain is Methionine aminopeptidase (251 aa).

His-77 is a binding site for substrate. Residues Asp-94, Asp-105, and His-169 each coordinate a divalent metal cation. His-176 is a binding site for substrate. A divalent metal cation contacts are provided by Glu-202 and Glu-233.

Belongs to the peptidase M24A family. Methionine aminopeptidase type 1 subfamily. As to quaternary structure, monomer. The cofactor is Co(2+). Requires Zn(2+) as cofactor. Mn(2+) is required as a cofactor. It depends on Fe(2+) as a cofactor.

The enzyme catalyses Release of N-terminal amino acids, preferentially methionine, from peptides and arylamides.. Functionally, removes the N-terminal methionine from nascent proteins. The N-terminal methionine is often cleaved when the second residue in the primary sequence is small and uncharged (Met-Ala-, Cys, Gly, Pro, Ser, Thr, or Val). Requires deformylation of the N(alpha)-formylated initiator methionine before it can be hydrolyzed. This Mycoplasma capricolum subsp. capricolum (strain California kid / ATCC 27343 / NCTC 10154) protein is Methionine aminopeptidase.